Consider the following 569-residue polypeptide: Vacuolar protein sorting-associated protein 53 B (569 aa).

Coiled coils occupy residues 53-90, 125-145, and 295-316; these read TRAKENLNDAICAAEELSHKIQEIKSKAEQTEAMVQDI, QVMTSKRQYKEAATQLEAINE, and KEKSDVEKLLLELKRTLEFERE.

The protein belongs to the VPS53 family. In terms of assembly, component of the Golgi-associated retrograde protein (GARP) complex.

The protein localises to the cytoplasm. It is found in the golgi apparatus. Its subcellular location is the trans-Golgi network membrane. The protein resides in the endosome membrane. Its function is as follows. Involved in retrograde transport from early and late endosomes to late Golgi, leading to the membrane fusion between late Golgi and endosomal vesicles. The protein is Vacuolar protein sorting-associated protein 53 B of Arabidopsis thaliana (Mouse-ear cress).